Reading from the N-terminus, the 142-residue chain is HTH-type transcriptional regulator MntR (142 aa).

One can recognise an HTH dtxR-type domain in the interval 1–63; sequence MTTPSMEDYI…YEKYRGLVLT (63 aa). 6 residues coordinate Mn(2+): D8, E11, H77, E99, E102, and H103.

The protein belongs to the DtxR/MntR family. As to quaternary structure, homodimer.

The protein resides in the cytoplasm. Its activity is regulated as follows. DNA binding is strongly activated by Mn(2+). Functionally, central regulator of manganese homeostasis. The protein is HTH-type transcriptional regulator MntR of Bacillus velezensis (strain DSM 23117 / BGSC 10A6 / LMG 26770 / FZB42) (Bacillus amyloliquefaciens subsp. plantarum).